The following is a 372-amino-acid chain: Alanine racemase (372 aa).

Residue Lys-36 is the Proton acceptor; specific for D-alanine of the active site. N6-(pyridoxal phosphate)lysine is present on Lys-36. Residue Arg-134 coordinates substrate. Tyr-266 (proton acceptor; specific for L-alanine) is an active-site residue. Met-314 provides a ligand contact to substrate.

The protein belongs to the alanine racemase family. Pyridoxal 5'-phosphate is required as a cofactor.

It catalyses the reaction L-alanine = D-alanine. It participates in amino-acid biosynthesis; D-alanine biosynthesis; D-alanine from L-alanine: step 1/1. In terms of biological role, catalyzes the interconversion of L-alanine and D-alanine. May also act on other amino acids. This Nitratidesulfovibrio vulgaris (strain DSM 19637 / Miyazaki F) (Desulfovibrio vulgaris) protein is Alanine racemase (alr).